Consider the following 122-residue polypeptide: Large ribosomal subunit protein uL14 (122 aa).

The protein belongs to the universal ribosomal protein uL14 family. Part of the 50S ribosomal subunit. Forms a cluster with proteins L3 and L19. In the 70S ribosome, L14 and L19 interact and together make contacts with the 16S rRNA in bridges B5 and B8.

Its function is as follows. Binds to 23S rRNA. Forms part of two intersubunit bridges in the 70S ribosome. The sequence is that of Large ribosomal subunit protein uL14 from Flavobacterium johnsoniae (strain ATCC 17061 / DSM 2064 / JCM 8514 / BCRC 14874 / CCUG 350202 / NBRC 14942 / NCIMB 11054 / UW101) (Cytophaga johnsonae).